The chain runs to 464 residues: Non-neuronal cytoplasmic intermediate filament protein (464 aa).

Residues 1-14 (MSTQTKKVTRTIIT) are compositionally biased toward polar residues. The tract at residues 1–59 (MSTQTKKVTRTIITSSSGGGGGGGGGRASYSSSGRFSGGGGRMRAGGVTSRRSVGSSYS) is disordered. The head stretch occupies residues 1 to 101 (MSTQTKKVTR…RMTRAHEKQE (101 aa)). The segment covering 17 to 27 (SGGGGGGGGGR) has biased composition (gly residues). Residues 45-59 (AGGVTSRRSVGSSYS) are compositionally biased toward low complexity. In terms of domain architecture, IF rod spans 98 to 413 (EKQELSHLND…KLLEGEEIRL (316 aa)). Positions 102–133 (LSHLNDRFASYIDKVRYLQERNSKLEAQIKIQ) are coil 1A. The linker 1 stretch occupies residues 134–144 (ESREAPNIKDL). A coil 1B region spans residues 145–237 (YEKELRDLRA…FLKRVHDEEI (93 aa)). The segment at 238–264 (RQLQDQLNESLTIVEVDSRAASTFAPG) is linker 2. Residues 265-413 (PDLTEALREI…KLLEGEEIRL (149 aa)) are coil 2. The interval 414 to 464 (FGESKEGVQQTSSSSSSSYQYSMKSGSGGGGGGSSSGKQQVTVSVSSGEEK) is tail. Residues 415–464 (GESKEGVQQTSSSSSSSYQYSMKSGSGGGGGGSSSGKQQVTVSVSSGEEK) are disordered. Residues 420 to 438 (GVQQTSSSSSSSYQYSMKS) show a composition bias toward low complexity. Positions 439–448 (GSGGGGGGSS) are enriched in gly residues. The span at 449-464 (SGKQQVTVSVSSGEEK) shows a compositional bias: low complexity.

This sequence belongs to the intermediate filament family. Can form homopolymers.

Its subcellular location is the cytoplasm. The chain is Non-neuronal cytoplasmic intermediate filament protein from Branchiostoma lanceolatum (Common lancelet).